A 388-amino-acid polypeptide reads, in one-letter code: Splicing factor 3B subunit 4 (388 aa).

2 consecutive RRM domains span residues 13–91 and 100–179; these read ATIY…KASA and ANIF…YAFK. Residues 244 to 388 form a disordered region; the sequence is QPPPLMGMAQ…GMIPPPPPPS (145 aa). 3 stretches are compositionally biased toward pro residues: residues 261-325, 333-355, and 362-388; these read PPVP…PSRF, MPPP…PPRY, and MYPP…PPPS.

Belongs to the SF3B4 family.

The protein localises to the nucleus. In terms of biological role, subunit of the splicing factor SF3B required for 'A' complex assembly formed by the stable binding of U2 snRNP to the branchpoint sequence (BPS) in pre-mRNA. Sequence independent binding of SF3A/SF3B complex upstream of the branch site is essential, it may anchor U2 snRNP to the pre-mRNA. May also be involved in the assembly of the 'E' complex. SF3B4 has been found in complex 'B' and 'C' as well. Belongs also to the minor U12-dependent spliceosome, which is involved in the splicing of rare class of nuclear pre-mRNA intron. The polypeptide is Splicing factor 3B subunit 4 (sap-49) (Caenorhabditis elegans).